Consider the following 2177-residue polypeptide: Brefeldin A-inhibited guanine nucleotide-exchange protein 3 (2177 aa).

Over residues 282 to 295 (TSSTSTSLESDSAS) the composition is skewed to low complexity. The segment at 282–301 (TSSTSTSLESDSASPGVSDH) is disordered. A Phosphoserine modification is found at Ser471. Residues 511 to 524 (TGQTTLEGELGQTT) are compositionally biased toward polar residues. Disordered regions lie at residues 511-542 (TGQTTLEGELGQTTPEDHSGNHKNSLKSPAIP), 617-636 (AAEKDSGRSDVSDIGSDNCS), and 1031-1076 (DGAS…LSTA). The 214-residue stretch at 583-796 (RTRSYGSRYS…EELYHQVLDR (214 aa)) folds into the SEC7 domain. A compositionally biased stretch (basic and acidic residues) spans 618 to 627 (AEKDSGRSDV). Phosphoserine is present on residues Ser632 and Ser636. The span at 1032–1047 (GASQPPLTISQPQKAT) shows a compositional bias: polar residues. Ser1049 bears the Phosphoserine mark. The chain crosses the membrane as a helical span at residues 1492–1512 (GPGFGIYAVVHLLLPVMSVWL). 3 disordered regions span residues 1848-1877 (STDSSQQCSSEDEDIFEETAQVSPPRGKEK), 1946-2004 (ESST…RKKE), and 2033-2064 (KQQHNLSAFPKEVKVEKKGEPLGPRGQDSPLL). Positions 1960–1974 (TPSEDDRSQSREHMG) are enriched in basic and acidic residues. At Ser1991 the chain carries Phosphoserine. Composition is skewed to basic and acidic residues over residues 1993 to 2004 (KVEKKDPSRKKE) and 2043 to 2052 (KEVKVEKKGE). Ser2079, Ser2081, Ser2095, Ser2101, and Ser2103 each carry phosphoserine. The disordered stretch occupies residues 2082–2103 (AGPELLRQDKRPRSGSTGSSLS).

Interacts with PHB2. As to expression, expressed in breast cancer cell lines. Not expressed in normal tissues such as duct, mammary gland, lung, heart, liver, kidnay, bone marrow.

Its subcellular location is the cytoplasm. It is found in the cytoplasmic vesicle. It localises to the secretory vesicle. The protein localises to the secretory vesicle membrane. Functionally, participates in the regulation of systemic glucose homeostasis, where it negatively regulates insulin granule biogenesis in pancreatic islet beta cells. Also regulates glucagon granule production in pancreatic alpha cells. Inhibits nuclear translocation of the transcriptional coregulator PHB2 and may enhance estrogen receptor alpha (ESR1) transcriptional activity in breast cancer cells. The sequence is that of Brefeldin A-inhibited guanine nucleotide-exchange protein 3 from Homo sapiens (Human).